Consider the following 139-residue polypeptide: MKRTGLLNSELSYIISKLGHFDALTVCDAGLPIPEGVQRIDLAVSEGIPSFIDVVKAVLMEMELESVELAEEFKDVSSDRHDELISVLEMESAQRGKDIPVDYVRHVNFKLNTKKSVAIVRTGEFTPYANITFKAGVVF.

Residue His-20 is the Proton donor of the active site. Substrate-binding positions include Asp-28, His-106, and 128–130 (YAN).

This sequence belongs to the RbsD / FucU family. RbsD subfamily. As to quaternary structure, homodecamer.

The protein localises to the cytoplasm. It carries out the reaction beta-D-ribopyranose = beta-D-ribofuranose. It functions in the pathway carbohydrate metabolism; D-ribose degradation; D-ribose 5-phosphate from beta-D-ribopyranose: step 1/2. In terms of biological role, catalyzes the interconversion of beta-pyran and beta-furan forms of D-ribose. The sequence is that of D-ribose pyranase from Maridesulfovibrio salexigens (strain ATCC 14822 / DSM 2638 / NCIMB 8403 / VKM B-1763) (Desulfovibrio salexigens).